The chain runs to 71 residues: Sec-independent protein translocase protein TatA (71 aa).

The chain crosses the membrane as a helical span at residues 1–21 (MGASPVQLLIVLFIAVLVFGG).

Belongs to the TatA/E family. The Tat system comprises two distinct complexes: a TatABC complex, containing multiple copies of TatA, TatB and TatC subunits, and a separate TatA complex, containing only TatA subunits. Substrates initially bind to the TatABC complex, which probably triggers association of the separate TatA complex to form the active translocon.

The protein resides in the cell inner membrane. In terms of biological role, part of the twin-arginine translocation (Tat) system that transports large folded proteins containing a characteristic twin-arginine motif in their signal peptide across membranes. TatA could form the protein-conducting channel of the Tat system. In Dichelobacter nodosus (strain VCS1703A), this protein is Sec-independent protein translocase protein TatA.